The following is a 280-amino-acid chain: Chorismate mutase (280 aa).

Positions 3–256 (FMKPETVLDL…EVDYLLRRLE (254 aa)) constitute a Chorismate mutase domain. L-tyrosine contacts are provided by Arg-73, Arg-74, Asn-137, Gly-139, and Ser-140. Positions 137, 139, and 140 each coordinate L-tryptophan.

In terms of assembly, homodimer.

It localises to the cytoplasm. It catalyses the reaction chorismate = prephenate. It functions in the pathway metabolic intermediate biosynthesis; prephenate biosynthesis; prephenate from chorismate: step 1/1. Each dimer has two allosteric binding sites that can bind the regulatory effectors tryptophan or tyrosine. Can bind either one tryptophan or one tyrosine, two tryptophan or two tyrosine or one tryptophan and one tyrosine, which differentially affect the catalytic activity. Activated by tryptophan and subject to feedback inhibition by tyrosine. In the presence of both tryptophan and tyrosine, the enzyme is in the activated state. Its function is as follows. Catalyzes the Claisen rearrangement of chorismate to prephenate. Acts at the first branch point in the aromatic amino acid pathway where it steers biosynthesis towards phenylalanine and tyrosine, and away from tryptophan. This is Chorismate mutase from Pichia angusta (Yeast).